Consider the following 708-residue polypeptide: MSPWQPLLLVLLALGYSFAAPHQRQPTYVVFPRDLKTSNLTDTQLAEDYLYRYGYTRAAQMMGEKQSLRPALLMLQKQLSLPQTGELDSETLKAIRSPRCGVPDVGKFQTFDGDLKWHHHNITYWIQSYTEDLPRDVIDDSFARAFAVWSAVTPLTFTRVYGLEADIVIQFGVAEHGDGYPFDGKDGLLAHAFPPGPGIQGDAHFDDDELWSLGKGAVVPTYFGNANGAPCHFPFTFEGRSYLSCTTDGRNDGKPWCGTTADYDTDRKYGFCPSENLYTEHGNGDGKPCVFPFIFEGHSYSACTTKGRSDGYRWCATTANYDQDKADGFCPTRADVTVTGGNSAGEMCVFPFVFLGKQYSTCTSEGRSDGRLWCATTSNFDADKKWGFCPDQGYSLFLVAAHEFGHALGLDHSSVPEALMYPMYHYHEDSPLHEDDIKGIHHLYGRGSKPDPRPPATTAAEPQPTAPPTMCSTAPPMAYPTGGPTVAPTGAPSPGPTGPPTAGPSEAPTESSTPDDNPCNVDVFDAIADIQGALHFFKDGRYWKFSNHGGNQLQGPFLIARTWPAFPSKLNSAFEDPQPKKIFFFLWAQMWVYTGQSVLGPRSLDKLGLGSEVTLVTGLLPRRGGKALLISRERIWKFDLKSQKVDPQSVTRLDNEFSGVPWNSHNVFQYQDKAYFCHDKYFWRVSFHNRVNQVDHVAYVTYDLLQCP.

Positions 1-19 (MSPWQPLLLVLLALGYSFA) are cleaved as a signal peptide. The propeptide at 20-107 (APHQRQPTYV…PRCGVPDVGK (88 aa)) is activation peptide. Asparagine 39 is a glycosylation site (N-linked (GlcNAc...) asparagine). The short motif at 98–105 (PRCGVPDV) is the Cysteine switch element. Residue cysteine 100 participates in Zn(2+) binding. Asparagine 121 is a glycosylation site (N-linked (GlcNAc...) asparagine). Ca(2+)-binding residues include aspartate 132 and aspartate 166. Histidine 176 and aspartate 178 together coordinate Zn(2+). Ca(2+) contacts are provided by aspartate 183, glycine 184, aspartate 186, and leucine 188. Residue histidine 191 coordinates Zn(2+). Positions 198, 200, and 202 each coordinate Ca(2+). Position 204 (histidine 204) interacts with Zn(2+). Residues aspartate 206, aspartate 207, and glutamate 209 each coordinate Ca(2+). 3 Fibronectin type-II domains span residues 226–274 (ANGA…FCPS), 284–332 (GDGK…FCPT), and 343–391 (SAGE…FCPD). 6 cysteine pairs are disulfide-bonded: cysteine 231–cysteine 257, cysteine 245–cysteine 272, cysteine 289–cysteine 315, cysteine 303–cysteine 330, cysteine 348–cysteine 374, and cysteine 362–cysteine 389. Histidine 402 is a binding site for Zn(2+). Glutamate 403 is a catalytic residue. The Zn(2+) site is built by histidine 406 and histidine 412. Residues 441–520 (HHLYGRGSKP…SSTPDDNPCN (80 aa)) are disordered. Residues 480-490 (PTGGPTVAPTG) are compositionally biased toward low complexity. Residues 491–502 (APSPGPTGPPTA) are compositionally biased toward pro residues. A disulfide bond links cysteine 519 and cysteine 707. 4 Hemopexin repeats span residues 521-566 (VDVF…WPAF), 567-611 (PSKL…GLGS), 613-660 (VTLV…FSGV), and 661-707 (PWNS…LLQC).

The protein belongs to the peptidase M10A family. In terms of assembly, exists as monomer or homodimer; disulfide-linked. Also exists as heterodimer with LCN2. Macrophages and transformed cell lines produce only the monomeric form. Interacts with ECM1. Requires Zn(2+) as cofactor. The cofactor is Ca(2+). N- and O-glycosylated.

Its subcellular location is the secreted. It is found in the extracellular space. The protein localises to the extracellular matrix. It catalyses the reaction Cleavage of gelatin types I and V and collagen types IV and V.. Matrix metalloproteinase that plays an essential role in local proteolysis of the extracellular matrix and in leukocyte migration. Could play a role in bone osteoclastic resorption. Cleaves KiSS1 at a Gly-|-Leu bond. Cleaves NINJ1 to generate the Secreted ninjurin-1 form. Cleaves type IV and type V collagen into large C-terminal three quarter fragments and shorter N-terminal one quarter fragments. Degrades fibronectin but not laminin or Pz-peptide. The chain is Matrix metalloproteinase-9 (Mmp9) from Rattus norvegicus (Rat).